We begin with the raw amino-acid sequence, 364 residues long: O-methyltransferase 1 (364 aa).

Positions 183, 207, 230, 250, and 264 each coordinate S-adenosyl-L-homocysteine. D230 serves as a coordination point for S-adenosyl-L-methionine. Catalysis depends on H268, which acts as the Proton acceptor.

Belongs to the class I-like SAM-binding methyltransferase superfamily. Cation-independent O-methyltransferase family. Homodimer.

It catalyses the reaction dopamine + S-adenosyl-L-methionine = 3-methoxytyramine + S-adenosyl-L-homocysteine + H(+). The enzyme catalyses 3,4-dihydroxy-5-methoxyphenethylamine + S-adenosyl-L-methionine = 4-hydroxy-3,5-dimethoxyphenethylamine + S-adenosyl-L-homocysteine + H(+). The protein operates within aromatic compound metabolism. It participates in alkaloid biosynthesis. Functionally, O-methyltransferase participating in the biosynthesis of natural products derived from phenylethylamine, including mescaline, a natural hallucinogen potentially used in psychotherapeutic treatments. Catalyzes the O-methylation of mescaline meta hydroxyl groups, using dopamine and 3,4-dihydroxy-5-methoxyphenethylamine as substrates. This Lophophora williamsii (Peyote) protein is O-methyltransferase 1.